The chain runs to 263 residues: Hemin import ATP-binding protein HmuV (263 aa).

The 241-residue stretch at 2–242 (IEARDVSVDI…DLIEKVFDCR (241 aa)) folds into the ABC transporter domain. 34–41 (GPNGSGKT) serves as a coordination point for ATP.

It belongs to the ABC transporter superfamily. Heme (hemin) importer (TC 3.A.1.14.5) family. As to quaternary structure, the complex is composed of two ATP-binding proteins (HmuV), two transmembrane proteins (HmuU) and a solute-binding protein (HmuT).

The protein resides in the cell inner membrane. Its function is as follows. Part of the ABC transporter complex HmuTUV involved in hemin import. Responsible for energy coupling to the transport system. The chain is Hemin import ATP-binding protein HmuV from Mesorhizobium japonicum (strain LMG 29417 / CECT 9101 / MAFF 303099) (Mesorhizobium loti (strain MAFF 303099)).